We begin with the raw amino-acid sequence, 518 residues long: MATTRFPSLLFYSYIFLLCNGSMAQLFGQSFTPWQSSRQGGLRGCRFDRLQAFEPLRQVRSQAGIIEYFDEQNEQFRCAGVSVIRRVIEPQGLLLPQYHNAPGLVYILQGRGFTGLTFPGCPATFQQQFQPFDQAQFAEGQSQSQNLKDEHQRVHHIKQGDVVALPAGIVHWCYNDGDAPIVAVYVFDVNNNANQLEPRQKEFLLAGNNKREQQFGQNIFSGFSVQLLSEALGISQQVAQKIQSQNDQRGEIIRVSQGLQFLKPFVSQQGPVEHQAYQPIQSQEEQSTQYQVGQSPQYQEGQSTQYQPGQSWDQSFNGLEENFCSLEARQNIENPKRADTYNPRAGRITHLNSKNFPTLNLVQMSATRVNLYQNAILSPYWNINAHSVMHMIQGRARVQVVNNHGQTVFNDILRRGQLLIIPQHYVVLKKAEREGCQYISFKTNPNSMVSQIAGKTSILRALPVDVLANAYRISRQEAQNLKNNRGEEFDAFTPKFTQTGSQSYQDEGESSSTEKASE.

The first 24 residues, Met1–Ala24, serve as a signal peptide directing secretion. 2 disulfides stabilise this stretch: Cys45/Cys78 and Cys121/Cys324. The Cupin type-1 1 domain occupies Leu50–Gln240. The disordered stretch occupies residues Ile280–Ser311. The region spanning Gln330–Gln479 is the Cupin type-1 2 domain. The tract at residues Lys482 to Glu518 is disordered. Over residues Lys495–Glu518 the composition is skewed to polar residues.

This sequence belongs to the 11S seed storage protein (globulins) family. As to quaternary structure, hexamer; each subunit is composed of an acidic and a basic chain derived from a single precursor and linked by a disulfide bond.

In terms of biological role, this is a seed storage protein. This is 12S seed storage globulin 2 from Avena sativa (Oat).